A 94-amino-acid chain; its full sequence is Pyrimidine/purine nucleoside phosphorylase (94 aa).

This sequence belongs to the nucleoside phosphorylase PpnP family.

It carries out the reaction a purine D-ribonucleoside + phosphate = a purine nucleobase + alpha-D-ribose 1-phosphate. The enzyme catalyses adenosine + phosphate = alpha-D-ribose 1-phosphate + adenine. It catalyses the reaction cytidine + phosphate = cytosine + alpha-D-ribose 1-phosphate. The catalysed reaction is guanosine + phosphate = alpha-D-ribose 1-phosphate + guanine. It carries out the reaction inosine + phosphate = alpha-D-ribose 1-phosphate + hypoxanthine. The enzyme catalyses thymidine + phosphate = 2-deoxy-alpha-D-ribose 1-phosphate + thymine. It catalyses the reaction uridine + phosphate = alpha-D-ribose 1-phosphate + uracil. The catalysed reaction is xanthosine + phosphate = alpha-D-ribose 1-phosphate + xanthine. Its function is as follows. Catalyzes the phosphorolysis of diverse nucleosides, yielding D-ribose 1-phosphate and the respective free bases. Can use uridine, adenosine, guanosine, cytidine, thymidine, inosine and xanthosine as substrates. Also catalyzes the reverse reactions. This Pseudomonas fluorescens (strain Pf0-1) protein is Pyrimidine/purine nucleoside phosphorylase.